A 389-amino-acid chain; its full sequence is Putative glutamate--cysteine ligase 2 (389 aa).

The protein belongs to the glutamate--cysteine ligase type 2 family. YbdK subfamily.

The catalysed reaction is L-cysteine + L-glutamate + ATP = gamma-L-glutamyl-L-cysteine + ADP + phosphate + H(+). Functionally, ATP-dependent carboxylate-amine ligase which exhibits weak glutamate--cysteine ligase activity. This chain is Putative glutamate--cysteine ligase 2, found in Rhodospirillum rubrum (strain ATCC 11170 / ATH 1.1.1 / DSM 467 / LMG 4362 / NCIMB 8255 / S1).